Here is a 142-residue protein sequence, read N- to C-terminus: MLSEKFHLRLLTLLTLLTALSLTDVASESKLEKLLMKRVDRDVKPAAAVAVSPSKAKEFLTSLKRPKRNLWDRSRPDVQQWIQQFMYMGFDEARLETDLAYWMDQHRSSDQGRQHHYDENAALGPRGAASYRHGANVNYDYY.

Residues 1 to 28 (MLSEKFHLRLLTLLTLLTALSLTDVASE) form the signal peptide. 2 propeptides span residues 29–66 (SKLEKLLMKRVDRDVKPAAAVAVSPSKAKEFLTSLKRP) and 127–142 (GAASYRHGANVNYDYY).

The protein belongs to the augurin family.

The protein resides in the secreted. It is found in the cytoplasm. The protein localises to the apical cell membrane. In terms of biological role, probable hormone. Required for the proper formation of the central nervous system by attenuating cell proliferation during development. This Danio rerio (Zebrafish) protein is Augurin-A.